A 340-amino-acid polypeptide reads, in one-letter code: Glyceraldehyde-3-phosphate dehydrogenase (340 aa).

Residues 11-12 (SI) and Gly-111 each bind NAD(+). 140–142 (SCN) contacts D-glyceraldehyde 3-phosphate. Catalysis depends on Cys-141, which acts as the Nucleophile. Arg-169 contributes to the NAD(+) binding site. D-glyceraldehyde 3-phosphate is bound at residue 195-196 (HG). Gln-303 lines the NAD(+) pocket.

Belongs to the glyceraldehyde-3-phosphate dehydrogenase family. In terms of assembly, homotetramer.

The protein resides in the cytoplasm. It catalyses the reaction D-glyceraldehyde 3-phosphate + phosphate + NADP(+) = (2R)-3-phospho-glyceroyl phosphate + NADPH + H(+). The catalysed reaction is D-glyceraldehyde 3-phosphate + phosphate + NAD(+) = (2R)-3-phospho-glyceroyl phosphate + NADH + H(+). It participates in carbohydrate degradation; glycolysis; pyruvate from D-glyceraldehyde 3-phosphate: step 1/5. The sequence is that of Glyceraldehyde-3-phosphate dehydrogenase from Methanococcus vannielii (strain ATCC 35089 / DSM 1224 / JCM 13029 / OCM 148 / SB).